Consider the following 1203-residue polypeptide: MSEVKLTPEQNEAIHSSGKNILVSASAGSGKTFVMAQRIVEKVKQGIEIDRLFISTFTKKAASELRMRLERDLKKARQESSDDEEAHRLTLALQNLSNADIGTMDSFTQKLTKANFNRVNIDPNFRILADQTESDLIRQEVFEQLVESYLSADESLNISKDKFEKLIKNFSKDRNILGFQKVVYTIYRFASATENPISWLENQFLKGFETYKSLTDLSEDFTVNVKENLLTFFELLENSLTNGVIAKKGAGRDKANLILDNKNELLEAISKKDFVTCTALFLSIDTDIRVGSSKDEALSALKKDFSAQKQDLVGSKSKPGELRKFVDKIKHGQLIEKYQNQAFEIASDLQKFIIDFYKTYLERKKNENAFEYSDIAHFAIEILEENPDIRENLREHYDEIMIDEYQDTSHTQERMLELLSNGHNLFMVGDIKQSIYGFRLADPGLFLEKYKSYDQAENPNQLIRLKENFRSRGEVLNFTNDIFKHLMDEKLGEMTYGKEEALVQGNISDYPVEAEKDFYPELLLYKENTSEEEIEDSEVKISDGEIKGAAQEIKKLIEYGVEPKDIAILVRSKSNNNKIEDILLSYDIPVVLDEGRVDFLKSMEVLIMLDVLRAIDNPLYDLSLVAMLRSPLFGFNEDELTRISVQGSRDLRFWDKILLSLKKEGKNPELINLSLEQKLKAFNQKFTEWRKLVNKIPIHRLLWKIYTETYYFDYVGALKNGEMRQANLQALSVRAESYESSGYKGLFKFVRLINKFMEQNNDLASVNIKLPQNAVRVMTFHKSKGLEFDYVFLMNLQSRFNDRDLKEDVILSREHGLGMKYIADLKAEPDVITDFPYALVKMETFPYMVNKDLKQRAALSEEMRVLYVAFTRAKKKLYLVGKIKDTDKKAGLELYDAATLEGKILSDKFRNSSRGFQHWILALQNATKLPMKLNVYTKDELETEKLEFTSQPDFKKLVEESEKFDNIMSFSDEIKEAQKIMNYQYPHQAATELSSIQTPSQVKKRSYEKQLQVGEVQPVSEFVRVKNLDFSDFGPKKITAAEMGSATHSFMQYADFSQADLFSFQATLDEMGFDEKIKNQIDITKILTLFDTEFGQFLSENVDKTVKEAPFSMLRTDEFAKEQYIVRGICDGFVKLADKIILFDYKTDRFTNVSAISEIKERYKDQMNLYSEALQKAYHVNQIDKYLILLGGPRKVFVEKIDD.

The region spanning V4–R472 is the UvrD-like helicase ATP-binding domain. A25–T32 lines the ATP pocket. In terms of domain architecture, UvrD-like helicase C-terminal spans V503–G785.

The protein belongs to the helicase family. AddA subfamily. As to quaternary structure, heterodimer of RexA (AddA) and RexB. It depends on Mg(2+) as a cofactor.

It catalyses the reaction Couples ATP hydrolysis with the unwinding of duplex DNA by translocating in the 3'-5' direction.. The catalysed reaction is ATP + H2O = ADP + phosphate + H(+). In terms of biological role, the heterodimer acts both as an ATP-dependent DNA helicase and an ATP-dependent, dual-direction single-stranded exonuclease. Recognizes the L.lactis chi site (5'-GCGCGTG-3'), which stimulates homologous recombination. The RexA (AddA) nuclease domain is required for chi fragment generation; this subunit has 3'-&gt;5' exonuclease activity and probably also performs the helicase function. This Lactococcus lactis subsp. cremoris (strain MG1363) protein is Exonuclease/helicase subunit RexA.